A 435-amino-acid polypeptide reads, in one-letter code: Nucleoredoxin (435 aa).

S2 carries the post-translational modification N-acetylserine. A Thioredoxin domain is found at 167 to 321 (PKPFREVIAG…VLELSDSNAV (155 aa)).

This sequence belongs to the nucleoredoxin family. Associates with the phosphatase 2A holoenzyme. Interacts with PPP2CA; the interaction is direct. Interacts with DVL1 (via PDZ domain); the interaction is direct and regulated by oxidative stress.

The protein localises to the cytoplasm. It is found in the cytosol. The protein resides in the nucleus. It catalyses the reaction [protein]-dithiol + NAD(+) = [protein]-disulfide + NADH + H(+). The catalysed reaction is [protein]-dithiol + NADP(+) = [protein]-disulfide + NADPH + H(+). In terms of biological role, functions as a redox-dependent negative regulator of the Wnt signaling pathway, possibly by preventing ubiquitination of DVL3 by the BCR(KLHL12) complex. May also function as a transcriptional regulator act as a regulator of protein phosphatase 2A (PP2A). In Bos taurus (Bovine), this protein is Nucleoredoxin (NXN).